The chain runs to 224 residues: Small ribosomal subunit protein uS3 (224 aa).

The KH type-2 domain occupies 38–106; sequence LREYVKEKLG…EVYLNVVEVR (69 aa).

This sequence belongs to the universal ribosomal protein uS3 family. As to quaternary structure, part of the 30S ribosomal subunit. Forms a tight complex with proteins S10 and S14.

Its function is as follows. Binds the lower part of the 30S subunit head. Binds mRNA in the 70S ribosome, positioning it for translation. The protein is Small ribosomal subunit protein uS3 of Anaeromyxobacter sp. (strain Fw109-5).